The following is a 297-amino-acid chain: Juvenile hormone acid O-methyltransferase (297 aa).

Belongs to the methyltransferase superfamily. As to expression, predominantly expressed in corpora allata. Also expressed at low level in testis.

It catalyses the reaction (2E,6E)-farnesoate + S-adenosyl-L-methionine = methyl (2E,6E)-farnesoate + S-adenosyl-L-homocysteine. The catalysed reaction is juvenile hormone III carboxylate + S-adenosyl-L-methionine = juvenile hormone III + S-adenosyl-L-homocysteine. Functionally, O-methyltransferase that transfers a methyl group from S-adenosyl-L-methionine (SAM) to the carboxyl group of juvenile hormone acids to produce active juvenile hormones in the corpora allata, the last step during juvenile hormone biosynthesis. Also able to methylate farnesoate to methyl farnesoate. This Drosophila melanogaster (Fruit fly) protein is Juvenile hormone acid O-methyltransferase.